The following is a 145-amino-acid chain: Small ribosomal subunit protein uS17c (145 aa).

A chloroplast-targeting transit peptide spans Met-1–Ala-36. The segment at Lys-101 to Asp-145 is disordered. Positions Gln-120–Gln-136 are enriched in low complexity.

This sequence belongs to the universal ribosomal protein uS17 family. As to quaternary structure, part of the 30S ribosomal subunit.

The protein localises to the plastid. It localises to the chloroplast. In terms of biological role, one of the primary rRNA binding proteins, it binds specifically to the 5'-end of 16S ribosomal RNA. In Oryza sativa subsp. japonica (Rice), this protein is Small ribosomal subunit protein uS17c (RPS17).